The following is a 554-amino-acid chain: Arginine--tRNA ligase (554 aa).

The 'HIGH' region signature appears at 132-142 (ANPTGPIHLGG).

The protein belongs to the class-I aminoacyl-tRNA synthetase family. In terms of assembly, monomer.

The protein resides in the cytoplasm. The catalysed reaction is tRNA(Arg) + L-arginine + ATP = L-arginyl-tRNA(Arg) + AMP + diphosphate. The polypeptide is Arginine--tRNA ligase (Clavibacter sepedonicus (Clavibacter michiganensis subsp. sepedonicus)).